A 61-amino-acid polypeptide reads, in one-letter code: Small ribosomal subunit protein uS14 (61 aa).

Cys24, Cys27, Cys40, and Cys43 together coordinate Zn(2+).

Belongs to the universal ribosomal protein uS14 family. Zinc-binding uS14 subfamily. Part of the 30S ribosomal subunit. Contacts proteins S3 and S10. Zn(2+) serves as cofactor.

Its function is as follows. Binds 16S rRNA, required for the assembly of 30S particles and may also be responsible for determining the conformation of the 16S rRNA at the A site. This Chloroflexus aurantiacus (strain ATCC 29364 / DSM 637 / Y-400-fl) protein is Small ribosomal subunit protein uS14.